Reading from the N-terminus, the 386-residue chain is Interleukin-13 receptor subunit alpha-2 (386 aa).

An N-terminal signal peptide occupies residues M1–G21. At S22–T338 the chain is on the extracellular side. 3 Fibronectin type-III domains span residues P33–G133, K138–I234, and P239–T338. The cysteines at positions 64 and 112 are disulfide-linked. N-linked (GlcNAc...) asparagine glycosylation occurs at N114. Disulfide bonds link C144-C154 and C183-C196. N214 and N298 each carry an N-linked (GlcNAc...) asparagine glycan. Cysteines 268 and 315 form a disulfide. The WSXWS motif signature appears at W321–S325. A helical membrane pass occupies residues L339–L359. Topologically, residues L360–C386 are cytoplasmic.

Belongs to the type I cytokine receptor family. Type 5 subfamily. Interacts with IL4RA. Interacts with high affinity to interleukin-13 (IL13), but not to interleukin-4 (IL4). In terms of processing, cleaved by MMP8 leading to a soluble form that is also able to interact with IL13. As to expression, expressed in kidney, placenta, liver, skeletal muscle and thymus. Expression was not seen in whole blood and heart.

The protein localises to the cell membrane. Functionally, cell surface receptor that plays a role in the regulation of IL-13-mediated responses. Functions as a decoy receptor that inhibits IL-13- and IL-4-mediated signal transduction via the JAK-STAT pathway and thereby modulates immune responses and inflammation. Serves as a functional signaling receptor for IL-13 in an alternative pathway involving AP-1 ultimately leading to the production of TGFB1. The polypeptide is Interleukin-13 receptor subunit alpha-2 (IL13RA2) (Canis lupus familiaris (Dog)).